The primary structure comprises 121 residues: MDLQKVLPQMILLLLFLNLSPLGGHSHPLGSPSQSPEQSTMQKLLELIREKSEEMAQRQLSKDQGPTKELLKRVLRSQDSAFRIQERLRNSKMAHSSSCFGQKIDRIGAVSRLGCDGLRLF.

The first 26 residues, 1–26 (MDLQKVLPQMILLLLFLNLSPLGGHS), serve as a signal peptide directing secretion. C99 and C115 form a disulfide bridge.

This sequence belongs to the natriuretic peptide family. Post-translationally, the precursor molecule is proteolytically cleaved by the endoprotease Furin to produce brain natriuretic peptide 45. May undergo further proteolytic cleavage by various proteases such as DPP4, MME and possibly FAP, to give rise to a variety of shorter peptides. May be cleaved at Ser-91 by the prolyl endopeptidase FAP (seprase) activity (in vitro). May be degraded by IDE. During IDE degradation, the resulting products initially increase the activation of NPR1 and can also stimulate NPR2 to produce cGMP before the fragments are completely degraded and inactivated by IDE (in vitro). In terms of tissue distribution, expressed in the atria and ventricles, but at much lower levels than NPPA. Expression levels in the ventricles are slightly higher than in the atria. Very low levels of expression detected in the brain, hypothalamus, lung and aorta. As to expression, atria (at protein level). Cardiocytes (at protein level).

It is found in the secreted. In terms of biological role, cardiac hormone that plays a key role in mediating cardio-renal homeostasis. May also function as a paracrine antifibrotic factor in the heart. Acts by specifically binding and stimulating NPR1 to produce cGMP, which in turn activates effector proteins that drive various biological responses. Likely involved in regulating the extracellular fluid volume and maintaining the fluid-electrolyte balance through natriuresis, diuresis, kaluresis and chloruresis. The polypeptide is Natriuretic peptides B (Nppb) (Rattus norvegicus (Rat)).